We begin with the raw amino-acid sequence, 59 residues long: UPF0434 protein Ping_0902 (59 aa).

It belongs to the UPF0434 family.

The protein is UPF0434 protein Ping_0902 of Psychromonas ingrahamii (strain DSM 17664 / CCUG 51855 / 37).